The primary structure comprises 211 residues: Endonuclease III (211 aa).

In terms of domain architecture, HhH spans 108 to 127 (RAALEALPGVGRKTANVVLN). [4Fe-4S] cluster-binding residues include cysteine 187, cysteine 194, cysteine 197, and cysteine 203.

It belongs to the Nth/MutY family. The cofactor is [4Fe-4S] cluster.

It carries out the reaction 2'-deoxyribonucleotide-(2'-deoxyribose 5'-phosphate)-2'-deoxyribonucleotide-DNA = a 3'-end 2'-deoxyribonucleotide-(2,3-dehydro-2,3-deoxyribose 5'-phosphate)-DNA + a 5'-end 5'-phospho-2'-deoxyribonucleoside-DNA + H(+). Functionally, DNA repair enzyme that has both DNA N-glycosylase activity and AP-lyase activity. The DNA N-glycosylase activity releases various damaged pyrimidines from DNA by cleaving the N-glycosidic bond, leaving an AP (apurinic/apyrimidinic) site. The AP-lyase activity cleaves the phosphodiester bond 3' to the AP site by a beta-elimination, leaving a 3'-terminal unsaturated sugar and a product with a terminal 5'-phosphate. The chain is Endonuclease III from Escherichia coli O6:H1 (strain CFT073 / ATCC 700928 / UPEC).